The following is a 353-amino-acid chain: tRNA-specific 2-thiouridylase MnmA (353 aa).

Residues 6–13 and Leu32 each bind ATP; that span reads GMSGGVDS. The active-site Nucleophile is the Cys99. A disulfide bridge links Cys99 with Cys197. Residue Gly124 coordinates ATP. Residues 147 to 149 form an interaction with tRNA region; that stretch reads KDQ. The active-site Cysteine persulfide intermediate is the Cys197. Residues 303-304 form an interaction with tRNA region; sequence RY.

Belongs to the MnmA/TRMU family.

The protein localises to the cytoplasm. The catalysed reaction is S-sulfanyl-L-cysteinyl-[protein] + uridine(34) in tRNA + AH2 + ATP = 2-thiouridine(34) in tRNA + L-cysteinyl-[protein] + A + AMP + diphosphate + H(+). In terms of biological role, catalyzes the 2-thiolation of uridine at the wobble position (U34) of tRNA, leading to the formation of s(2)U34. The protein is tRNA-specific 2-thiouridylase MnmA of Persephonella marina (strain DSM 14350 / EX-H1).